Here is a 743-residue protein sequence, read N- to C-terminus: Putative pentatricopeptide repeat-containing protein At1g68930 (743 aa).

PPR repeat units follow at residues 40-70 (ETFL…IPQP), 71-101 (NLFS…LPDR), 102-132 (DGVT…MMRD), 138-172 (TRVT…GFES), 173-203 (YLLV…LDDR), 204-233 (NTVM…GMEK), 234-268 (DSVS…GLKM), 269-303 (DQYP…NFQD), 304-334 (HIYV…MKQK), 335-369 (NVVS…GIDP), 370-404 (DHYT…GLIH), 405-435 (YVTV…MNVR), 436-470 (DAVS…GLKP), 471-506 (DGVT…GIVP), and 507-537 (SIGH…MPFP). The tract at residues 542–617 (GWTTLLSACR…EPGQSWIKWK (76 aa)) is type E motif. A type E(+) motif region spans residues 618 to 648 (GKLHSFSADDESSPYLDQIYAKLEELNNKII). The type DYW motif stretch occupies residues 649–743 (DNGYKPDTSF…DGTCSCGDFW (95 aa)).

The protein belongs to the PPR family. PCMP-H subfamily.

The polypeptide is Putative pentatricopeptide repeat-containing protein At1g68930 (PCMP-H22) (Arabidopsis thaliana (Mouse-ear cress)).